The primary structure comprises 132 residues: Small ribosomal subunit protein uS8 (132 aa).

Belongs to the universal ribosomal protein uS8 family. Part of the 30S ribosomal subunit. Contacts proteins S5 and S12.

In terms of biological role, one of the primary rRNA binding proteins, it binds directly to 16S rRNA central domain where it helps coordinate assembly of the platform of the 30S subunit. The protein is Small ribosomal subunit protein uS8 of Corynebacterium diphtheriae (strain ATCC 700971 / NCTC 13129 / Biotype gravis).